A 238-amino-acid polypeptide reads, in one-letter code: Ubiquinone biosynthesis O-methyltransferase (238 aa).

S-adenosyl-L-methionine-binding residues include arginine 38, glycine 58, aspartate 79, and methionine 124.

It belongs to the methyltransferase superfamily. UbiG/COQ3 family.

The catalysed reaction is a 3-demethylubiquinol + S-adenosyl-L-methionine = a ubiquinol + S-adenosyl-L-homocysteine + H(+). It catalyses the reaction a 3-(all-trans-polyprenyl)benzene-1,2-diol + S-adenosyl-L-methionine = a 2-methoxy-6-(all-trans-polyprenyl)phenol + S-adenosyl-L-homocysteine + H(+). It participates in cofactor biosynthesis; ubiquinone biosynthesis. Its function is as follows. O-methyltransferase that catalyzes the 2 O-methylation steps in the ubiquinone biosynthetic pathway. This is Ubiquinone biosynthesis O-methyltransferase from Acinetobacter baylyi (strain ATCC 33305 / BD413 / ADP1).